The sequence spans 383 residues: MSSVEFSNQPVVIDNGSGVIKAGFAGQDPPSHIFQSLVGNPKYKKVMGLNIENESTYFVGDRINDWRGILKLKHPMDHGIVSNWSDMERVWTYTYDQLKIQPSEHPVLLTDVPNNPRLHRERAAQLFFETYNAPALYFSIPAVLSLYASGRTTGIVLDSGDGVTHVVPVFEGFALPHAISRIDIAGRDITEYLQHLLRRSGYNFKTSAEKEVVRIIKEKTCYVAHDPQKEEELLEPDSSSSKPVQPQYTLPDGNVIELGAERFRAPEILFHPDIIGDESLGIHQCLDMSIRKSDLDLRKTFYSNIILGGGSTLFQGFGDRLLNEVKKLAPKDIKIKITAPPERKYSAWMGGSILASLSTFKDLWVTRQEYEEDGCSVIHRKIF.

The segment at 227-246 is disordered; that stretch reads PQKEEELLEPDSSSSKPVQP.

It belongs to the actin family. ARP1 subfamily.

It is found in the cytoplasm. The protein resides in the cytoskeleton. Its subcellular location is the microtubule organizing center. The protein localises to the centrosome. Component of a multi-subunit complex, PPK2 (poly P kinase complex 2) involved in microtubule based vesicle motility. It is associated with the centrosome. PPK2 complex can synthesize a poly chain of hundreds of phosphate residues linked by ATP-like bonds. This is Centractin (arpA) from Dictyostelium discoideum (Social amoeba).